Reading from the N-terminus, the 313-residue chain is Pyrimidine-specific ribonucleoside hydrolase RihB (313 aa).

The active-site Proton acceptor is aspartate 11. Residues aspartate 11, aspartate 16, and valine 124 each coordinate Ca(2+). Substrate-binding residues include glutamine 227 and histidine 239. Aspartate 240 provides a ligand contact to Ca(2+).

The protein belongs to the IUNH family. RihB subfamily. As to quaternary structure, homotetramer. Ca(2+) serves as cofactor.

The catalysed reaction is a pyrimidine ribonucleoside + H2O = a pyrimidine nucleobase + D-ribose. Its function is as follows. Hydrolyzes cytidine or uridine to ribose and cytosine or uracil, respectively. Has a clear preference for cytidine over uridine. Strictly specific for ribonucleosides. The polypeptide is Pyrimidine-specific ribonucleoside hydrolase RihB (Escherichia coli (strain SE11)).